Consider the following 597-residue polypeptide: Medium/long-chain-fatty-acid--CoA ligase FadD6 (597 aa).

The protein belongs to the ATP-dependent AMP-binding enzyme family.

It carries out the reaction a medium-chain fatty acid + ATP + CoA = a medium-chain fatty acyl-CoA + AMP + diphosphate. The catalysed reaction is a long-chain fatty acid + ATP + CoA = a long-chain fatty acyl-CoA + AMP + diphosphate. It catalyses the reaction hexanoate + ATP + CoA = hexanoyl-CoA + AMP + diphosphate. The enzyme catalyses octanoate + ATP + CoA = octanoyl-CoA + AMP + diphosphate. It carries out the reaction decanoate + ATP + CoA = decanoyl-CoA + AMP + diphosphate. The catalysed reaction is dodecanoate + ATP + CoA = dodecanoyl-CoA + AMP + diphosphate. It catalyses the reaction tetradecanoate + ATP + CoA = tetradecanoyl-CoA + AMP + diphosphate. The enzyme catalyses hexadecanoate + ATP + CoA = hexadecanoyl-CoA + AMP + diphosphate. It carries out the reaction octadecanoate + ATP + CoA = octadecanoyl-CoA + AMP + diphosphate. The catalysed reaction is 9-decenoate + ATP + CoA = 9-decenoyl-CoA + AMP + diphosphate. It catalyses the reaction (9Z)-octadecenoate + ATP + CoA = (9Z)-octadecenoyl-CoA + AMP + diphosphate. The enzyme catalyses 2-hydroxyhexadecanoate + ATP + CoA = 2-hydroxyhexadecanoyl-CoA + AMP + diphosphate. It carries out the reaction 3-hydroxytetradecanoate + ATP + CoA = 3-hydroxytetradecanoyl-CoA + AMP + diphosphate. The catalysed reaction is 12-hydroxyoctadecanoate + ATP + CoA = 12-hydroxyoctadecanoyl-CoA + AMP + diphosphate. It catalyses the reaction 15-hydroxypentadecanoate + ATP + CoA = 15-hydroxypentadecanoyl-CoA + AMP + diphosphate. The enzyme catalyses 16-hydroxyhexadecanoate + ATP + CoA = 16-hydroxyhexadecanoyl-CoA + AMP + diphosphate. It carries out the reaction 2-methylhexadecanoate + ATP + CoA = 2-methylhexadecanoyl-CoA + AMP + diphosphate. The catalysed reaction is 3-methylundecanoate + ATP + CoA = 3-methylundecanoyl-CoA + AMP + diphosphate. It catalyses the reaction 12-methyltridecanoate + ATP + CoA = 12-methyltridecanoyl-CoA + AMP + diphosphate. The enzyme catalyses 12-methyloctadecanoate + ATP + CoA = 12-methyloctadecanoyl-CoA + AMP + diphosphate. Catalyzes the activation of medium/long-chain fatty acids as acyl-coenzyme A (acyl-CoA). May play a role in the uptake of fatty acids by trapping them metabolically as CoA esters. May also play an important role in the channeling of fatty acids into triacylglycerol (TAG) for use by Mycobacterium during its dormancy. The sequence is that of Medium/long-chain-fatty-acid--CoA ligase FadD6 from Mycobacterium tuberculosis (strain ATCC 25618 / H37Rv).